Reading from the N-terminus, the 170-residue chain is Probable T4-type lysozyme 1 (170 aa).

Glu-13 functions as the Proton donor in the catalytic mechanism. The active-site Nucleophile is the Asp-22.

The protein belongs to the glycosyl hydrolase 24 family.

The enzyme catalyses Hydrolysis of (1-&gt;4)-beta-linkages between N-acetylmuramic acid and N-acetyl-D-glucosamine residues in a peptidoglycan and between N-acetyl-D-glucosamine residues in chitodextrins.. The protein is Probable T4-type lysozyme 1 of Dictyostelium discoideum (Social amoeba).